The primary structure comprises 176 residues: Skp1-related protein (176 aa).

It belongs to the SKP1 family. In terms of assembly, probable component of the SCF(sel-10) E3 ubiquitin-protein ligase complex containing F-box domain-containing protein sel-10 as the substrate recognition component. Interacts with cul-1. May interact with the F-box protein mec-15. Interacts with dre-1. Interacts with syg-1. Interacts with sel-10. In terms of tissue distribution, ubiquitously expressed in the adult.

Functionally, probable essential component of SCF (SKP1-CUL1-F-box protein) E3 ubiquitin-protein ligase complexes, which mediate the ubiquitination and subsequent proteasomal degradation of target proteins. Regulates cell proliferation during embryonic and larval development. Involved in synapse elimination in early synapse development. May negatively regulate the apoptotic activity of cep-1 in response to genotoxic stress. Plays a role in sex determination. The sequence is that of Skp1-related protein from Caenorhabditis elegans.